The primary structure comprises 391 residues: Terminal nucleotidyltransferase 5C (391 aa).

This sequence belongs to the TENT family. As to quaternary structure, interacts with BCCIP and PABPC1; the interaction has no effect on TENT5C poly(A) polymerase function. Interacts with PLK4; this interaction leads to the TENT5C recruitment into the centrosome. In terms of tissue distribution, expressed by splenocytes, expression is increased in activated splenocytes.

It localises to the nucleus. The protein localises to the cytoplasm. The protein resides in the cytoskeleton. Its subcellular location is the microtubule organizing center. It is found in the centrosome. The enzyme catalyses RNA(n) + ATP = RNA(n)-3'-adenine ribonucleotide + diphosphate. Functionally, catalyzes the transfer of one adenosine molecule from an ATP to an mRNA poly(A) tail bearing a 3'-OH terminal group and enhances mRNA stability and gene expression. Can also elongate RNA oligos ending with uridine molecule, provided that the sequence is adenosine-rich. Mainly targets mRNAs encoding endoplasmic reticulum-targeted protein. In Mus musculus (Mouse), this protein is Terminal nucleotidyltransferase 5C.